The primary structure comprises 253 residues: Major prion protein (253 aa).

Positions 1–22 are cleaved as a signal peptide; sequence MANLGCWMLVLFVATWSDLGLC. The interaction with GRB2, ERI3 and SYN1 stretch occupies residues 23 to 230; that stretch reads KKRPKPGGWN…ESQAYYQRGS (208 aa). The disordered stretch occupies residues 26-108; it reads PKPGGWNTGG…WHKPSKPKTS (83 aa). 5 tandem repeats follow at residues 51-59, 60-67, 68-75, 76-83, and 84-91. Residues 51-91 are 5 X 8 AA tandem repeats of P-H-G-G-G-W-G-Q; it reads PQGGGGWGQPHGGGWGQPHGGGWGQPHGGGWGQPHGGGWGQ. Gly residues predominate over residues 52-95; it reads QGGGGWGQPHGGGWGQPHGGGWGQPHGGGWGQPHGGGWGQGGGT. Positions 61, 62, 63, 69, 70, 71, 77, 78, 79, 85, 86, and 87 each coordinate Cu(2+). Over residues 98–108 the composition is skewed to basic residues; that stretch reads QWHKPSKPKTS. A disulfide bridge links Cys179 with Cys214. Residues Asn181 and Asn197 are each glycosylated (N-linked (GlcNAc...) asparagine). The GPI-anchor amidated serine moiety is linked to residue Ser230. The propeptide at 231–253 is removed in mature form; the sequence is SMVLFSSPPVILLISFLIFLIVG.

Belongs to the prion family. Monomer and homodimer. Has a tendency to aggregate into amyloid fibrils containing a cross-beta spine, formed by a steric zipper of superposed beta-strands. Soluble oligomers may represent an intermediate stage on the path to fibril formation. Copper binding may promote oligomerization. Interacts with GRB2, APP, ERI3/PRNPIP and SYN1. Mislocalized cytosolically exposed PrP interacts with MGRN1; this interaction alters MGRN1 subcellular location and causes lysosomal enlargement. Interacts with KIAA1191.

The protein localises to the cell membrane. It is found in the golgi apparatus. Functionally, its primary physiological function is unclear. Has cytoprotective activity against internal or environmental stresses. May play a role in neuronal development and synaptic plasticity. May be required for neuronal myelin sheath maintenance. May play a role in iron uptake and iron homeostasis. Soluble oligomers are toxic to cultured neuroblastoma cells and induce apoptosis (in vitro). Association with GPC1 (via its heparan sulfate chains) targets PRNP to lipid rafts. Also provides Cu(2+) or Zn(2+) for the ascorbate-mediated GPC1 deaminase degradation of its heparan sulfate side chains. The chain is Major prion protein (PRNP) from Macaca fascicularis (Crab-eating macaque).